The sequence spans 206 residues: Transcriptional regulator GfcR (206 aa).

Belongs to the purine/pyrimidine phosphoribosyltransferase family. GfcR subfamily.

In Methanosphaerula palustris (strain ATCC BAA-1556 / DSM 19958 / E1-9c), this protein is Transcriptional regulator GfcR.